The sequence spans 646 residues: Serine/threonine-protein kinase PLK3 (646 aa).

Residues 1-35 (MEPAAGFLSPRPFQRAAAAPAPPAGPGPPPSALRG) form a disordered region. A compositionally biased stretch (low complexity) spans 10 to 19 (PRPFQRAAAA). The segment covering 20-31 (PAPPAGPGPPPS) has biased composition (pro residues). Residues 62–314 (YLKGRLLGKG…IDQILRHDFF (253 aa)) form the Protein kinase domain. ATP-binding positions include 68-76 (LGKGGFARC) and Lys91. Asp185 acts as the Proton acceptor in catalysis. Residues 381-417 (GHQDARPEAPAASGPAPVSLVETAPEDSSPRGTLASS) form a disordered region. 2 POLO box domains span residues 463 to 541 (WVSK…YMEQ) and 562 to 645 (LLLQ…DRSP).

Belongs to the protein kinase superfamily. Ser/Thr protein kinase family. CDC5/Polo subfamily. In terms of assembly, interacts (via the POLO-box domain) with CIB1; leading to inhibit PLK3 kinase activity. Interacts with GOLGB1. Phosphorylated in an ATM-dependent manner following DNA damage. Phosphorylated as cells enter mitosis and dephosphorylated as cells exit mitosis. In terms of tissue distribution, transcripts are highly detected in placenta, lung, followed by skeletal muscle, heart, pancreas, ovaries and kidney and weakly detected in liver and brain. May have a short half-live. In cells of hematopoietic origin, strongly and exclusively detected in terminally differentiated macrophages. Transcript expression appears to be down-regulated in primary lung tumor.

It localises to the cytoplasm. It is found in the nucleus. The protein resides in the nucleolus. The protein localises to the golgi apparatus. Its subcellular location is the cytoskeleton. It localises to the microtubule organizing center. It is found in the centrosome. It carries out the reaction L-seryl-[protein] + ATP = O-phospho-L-seryl-[protein] + ADP + H(+). It catalyses the reaction L-threonyl-[protein] + ATP = O-phospho-L-threonyl-[protein] + ADP + H(+). Functionally, serine/threonine-protein kinase involved in cell cycle regulation, response to stress and Golgi disassembly. Polo-like kinases act by binding and phosphorylating proteins that are already phosphorylated on a specific motif recognized by the POLO box domains. Phosphorylates ATF2, BCL2L1, CDC25A, CDC25C, CHEK2, HIF1A, JUN, p53/TP53, p73/TP73, PTEN, TOP2A and VRK1. Involved in cell cycle regulation: required for entry into S phase and cytokinesis. Phosphorylates BCL2L1, leading to regulate the G2 checkpoint and progression to cytokinesis during mitosis. Plays a key role in response to stress: rapidly activated upon stress stimulation, such as ionizing radiation, reactive oxygen species (ROS), hyperosmotic stress, UV irradiation and hypoxia. Involved in DNA damage response and G1/S transition checkpoint by phosphorylating CDC25A, p53/TP53 and p73/TP73. Phosphorylates p53/TP53 in response to reactive oxygen species (ROS), thereby promoting p53/TP53-mediated apoptosis. Phosphorylates CHEK2 in response to DNA damage, promoting the G2/M transition checkpoint. Phosphorylates the transcription factor p73/TP73 in response to DNA damage, leading to inhibit p73/TP73-mediated transcriptional activation and pro-apoptotic functions. Phosphorylates HIF1A and JUN is response to hypoxia. Phosphorylates ATF2 following hyperosmotic stress in corneal epithelium. Also involved in Golgi disassembly during the cell cycle: part of a MEK1/MAP2K1-dependent pathway that induces Golgi fragmentation during mitosis by mediating phosphorylation of VRK1. May participate in endomitotic cell cycle, a form of mitosis in which both karyokinesis and cytokinesis are interrupted and is a hallmark of megakaryocyte differentiation, via its interaction with CIB1. This Homo sapiens (Human) protein is Serine/threonine-protein kinase PLK3 (PLK3).